The primary structure comprises 230 residues: Ribose-5-phosphate isomerase A (230 aa).

Substrate is bound by residues 32–35 (TGST), 85–88 (DGAD), and 98–101 (KGGG). Catalysis depends on glutamate 107, which acts as the Proton acceptor. Lysine 125 contributes to the substrate binding site.

It belongs to the ribose 5-phosphate isomerase family. In terms of assembly, homodimer.

It catalyses the reaction aldehydo-D-ribose 5-phosphate = D-ribulose 5-phosphate. It participates in carbohydrate degradation; pentose phosphate pathway; D-ribose 5-phosphate from D-ribulose 5-phosphate (non-oxidative stage): step 1/1. Its function is as follows. Catalyzes the reversible conversion of ribose-5-phosphate to ribulose 5-phosphate. In Burkholderia ambifaria (strain MC40-6), this protein is Ribose-5-phosphate isomerase A.